A 223-amino-acid chain; its full sequence is MTKQIARMIDHTALKPDTVKSEIEALCKEARVYGFASVCVNPCWVKLCAELLKESEVKVCTVIGFPLGAASPETKAFETRQAIADGAGEVDMVINIGALKDRDTGTVEHDIRAVTDAADGKALVKVIIETSLLTDEEKRLACELAVKAGADFVKTSTGFSGGGATVRDIKLMREAVGPDIGVKASGGVRDKESALAMIEAGATRIGASAGVSIVKGLTADEDY.

D91 functions as the Proton donor/acceptor in the catalytic mechanism. K154 serves as the catalytic Schiff-base intermediate with acetaldehyde. Catalysis depends on K183, which acts as the Proton donor/acceptor.

It belongs to the DeoC/FbaB aldolase family. DeoC type 1 subfamily.

It is found in the cytoplasm. It catalyses the reaction 2-deoxy-D-ribose 5-phosphate = D-glyceraldehyde 3-phosphate + acetaldehyde. It participates in carbohydrate degradation; 2-deoxy-D-ribose 1-phosphate degradation; D-glyceraldehyde 3-phosphate and acetaldehyde from 2-deoxy-alpha-D-ribose 1-phosphate: step 2/2. Its function is as follows. Catalyzes a reversible aldol reaction between acetaldehyde and D-glyceraldehyde 3-phosphate to generate 2-deoxy-D-ribose 5-phosphate. In Bacillus licheniformis (strain ATCC 14580 / DSM 13 / JCM 2505 / CCUG 7422 / NBRC 12200 / NCIMB 9375 / NCTC 10341 / NRRL NRS-1264 / Gibson 46), this protein is Deoxyribose-phosphate aldolase 1.